A 198-amino-acid polypeptide reads, in one-letter code: Nucleoid occlusion factor SlmA (198 aa).

An HTH tetR-type domain is found at Arg9–Leu70. Residues Thr33–Phe52 constitute a DNA-binding region (H-T-H motif). A coiled-coil region spans residues Asp119–Lys144.

This sequence belongs to the nucleoid occlusion factor SlmA family. In terms of assembly, homodimer. Interacts with FtsZ.

The protein localises to the cytoplasm. The protein resides in the nucleoid. Required for nucleoid occlusion (NO) phenomenon, which prevents Z-ring formation and cell division over the nucleoid. Acts as a DNA-associated cell division inhibitor that binds simultaneously chromosomal DNA and FtsZ, and disrupts the assembly of FtsZ polymers. SlmA-DNA-binding sequences (SBS) are dispersed on non-Ter regions of the chromosome, preventing FtsZ polymerization at these regions. The polypeptide is Nucleoid occlusion factor SlmA (Yersinia pseudotuberculosis serotype I (strain IP32953)).